Consider the following 172-residue polypeptide: Adenine phosphoribosyltransferase (172 aa).

It belongs to the purine/pyrimidine phosphoribosyltransferase family. In terms of assembly, homodimer.

Its subcellular location is the cytoplasm. It catalyses the reaction AMP + diphosphate = 5-phospho-alpha-D-ribose 1-diphosphate + adenine. Its pathway is purine metabolism; AMP biosynthesis via salvage pathway; AMP from adenine: step 1/1. Functionally, catalyzes a salvage reaction resulting in the formation of AMP, that is energically less costly than de novo synthesis. This is Adenine phosphoribosyltransferase from Synechococcus sp. (strain CC9311).